A 601-amino-acid polypeptide reads, in one-letter code: Glutathione-regulated potassium-efflux system protein KefB (601 aa).

Transmembrane regions (helical) follow at residues 4 to 24 (ADLL…VPLA), 29 to 49 (IGAV…GLGF), 55 to 75 (EILH…GLEL), 87 to 107 (IFGV…GLLM), 111 to 131 (FLWQ…TAMA), 152 to 172 (VLLF…LLAG), 177 to 197 (HFDW…LIGG), 207 to 227 (FIAA…LVLS), 230 to 250 (LFMD…GVLL), 262 to 282 (AIDP…GMSL), 284 to 304 (LGVL…LVVI), 324 to 344 (MQFA…FSTA), and 356 to 376 (ALLL…MKGI). Residues 400–519 (KPQVIVVGFG…AGVTQFSRET (120 aa)) enclose the RCK N-terminal domain.

Belongs to the monovalent cation:proton antiporter 2 (CPA2) transporter (TC 2.A.37) family. KefB subfamily. Interacts with the regulatory subunit KefG.

The protein localises to the cell inner membrane. Functionally, pore-forming subunit of a potassium efflux system that confers protection against electrophiles. Catalyzes K(+)/H(+) antiport. The chain is Glutathione-regulated potassium-efflux system protein KefB from Salmonella enteritidis PT4 (strain P125109).